The sequence spans 588 residues: Adenine deaminase (588 aa).

It belongs to the metallo-dependent hydrolases superfamily. Adenine deaminase family. As to quaternary structure, homodimer. Requires Mn(2+) as cofactor.

It catalyses the reaction adenine + H2O + H(+) = hypoxanthine + NH4(+). The chain is Adenine deaminase from Shigella boydii serotype 4 (strain Sb227).